The following is a 303-amino-acid chain: uncharacterized protein (303 aa).

Residues 173–300 enclose the Fe2OG dioxygenase domain; that stretch reads KLPELLGQLN…RFTVNGWIRK (128 aa).

The cofactor is Fe(2+). L-ascorbate is required as a cofactor.

This is an uncharacterized protein from Synechocystis sp. (strain ATCC 27184 / PCC 6803 / Kazusa).